A 487-amino-acid chain; its full sequence is Glutamyl-tRNA(Gln) amidotransferase subunit A (487 aa).

Active-site charge relay system residues include Lys80 and Ser155. Ser179 (acyl-ester intermediate) is an active-site residue.

It belongs to the amidase family. GatA subfamily. As to quaternary structure, heterotrimer of A, B and C subunits.

The catalysed reaction is L-glutamyl-tRNA(Gln) + L-glutamine + ATP + H2O = L-glutaminyl-tRNA(Gln) + L-glutamate + ADP + phosphate + H(+). Its function is as follows. Allows the formation of correctly charged Gln-tRNA(Gln) through the transamidation of misacylated Glu-tRNA(Gln) in organisms which lack glutaminyl-tRNA synthetase. The reaction takes place in the presence of glutamine and ATP through an activated gamma-phospho-Glu-tRNA(Gln). In Leptospira interrogans serogroup Icterohaemorrhagiae serovar copenhageni (strain Fiocruz L1-130), this protein is Glutamyl-tRNA(Gln) amidotransferase subunit A.